The chain runs to 220 residues: tRNA (guanine-N(7)-)-methyltransferase (220 aa).

4 residues coordinate S-adenosyl-L-methionine: Glu-44, Glu-69, Asp-96, and Asp-118. The active site involves Asp-118. Lys-122 serves as a coordination point for substrate. The interaction with RNA stretch occupies residues 124 to 129; it reads RHEKRR. Residues Asp-154 and 191-194 contribute to the substrate site; that span reads TEYE.

The protein belongs to the class I-like SAM-binding methyltransferase superfamily. TrmB family.

The enzyme catalyses guanosine(46) in tRNA + S-adenosyl-L-methionine = N(7)-methylguanosine(46) in tRNA + S-adenosyl-L-homocysteine. It participates in tRNA modification; N(7)-methylguanine-tRNA biosynthesis. Functionally, catalyzes the formation of N(7)-methylguanine at position 46 (m7G46) in tRNA. In Halalkalibacterium halodurans (strain ATCC BAA-125 / DSM 18197 / FERM 7344 / JCM 9153 / C-125) (Bacillus halodurans), this protein is tRNA (guanine-N(7)-)-methyltransferase.